Here is a 529-residue protein sequence, read N- to C-terminus: Tyrosinase (529 aa).

The N-terminal stretch at 1-18 (MLLAALCCLLWSFRTSAG) is a signal peptide. The Lumenal segment spans residues 19 to 472 (HFPRACASSK…IKPFLEQASR (454 aa)). 3 N-linked (GlcNAc...) asparagine glycosylation sites follow: Asn86, Asn111, and Asn161. Positions 180, 202, and 211 each coordinate Cu cation. Asn230 and Asn336 each carry an N-linked (GlcNAc...) asparagine glycan. Cu cation is bound by residues His362 and His366. Asn370 carries an N-linked (GlcNAc...) asparagine glycan. His389 contributes to the Cu cation binding site. The helical transmembrane segment at 473 to 495 (IWPWLIGAAVVGSVLTAVLGRLT) threads the bilayer. Residues 496-529 (SLLCRRKRKQLREERQPLLMEKEDYHSLLYQTHV) are Cytoplasmic-facing.

This sequence belongs to the tyrosinase family. As to quaternary structure, forms an OPN3-dependent complex with DCT in response to blue light in melanocytes. The cofactor is Cu(2+). Post-translationally, glycosylated.

It is found in the melanosome membrane. The protein localises to the melanosome. It catalyses the reaction 2 L-dopa + O2 = 2 L-dopaquinone + 2 H2O. The enzyme catalyses L-tyrosine + O2 = L-dopaquinone + H2O. The catalysed reaction is 2 5,6-dihydroxyindole-2-carboxylate + O2 = 2 indole-5,6-quinone-2-carboxylate + 2 H2O. In terms of biological role, this is a copper-containing oxidase that functions in the formation of pigments such as melanins and other polyphenolic compounds. Catalyzes the initial and rate limiting step in the cascade of reactions leading to melanin production from tyrosine. In addition to hydroxylating tyrosine to DOPA (3,4-dihydroxyphenylalanine), also catalyzes the oxidation of DOPA to DOPA-quinone, and possibly the oxidation of DHI (5,6-dihydroxyindole) to indole-5,6 quinone. This is Tyrosinase (TYR) from Felis catus (Cat).